The sequence spans 86 residues: Protein GOLVEN 1 (86 aa).

Positions 1–29 are cleaved as a signal peptide; sequence MSCSLRSGLVIVFCFILLLLSSNVGCASA. Residues 30 to 70 constitute a propeptide that is removed on maturation; sequence ARRLRSHKHHHHKVASLDVFNGGERRRALGGVETGEEVVVM. Tyrosine 72 carries the post-translational modification Sulfotyrosine. A Hydroxyproline modification is found at proline 80. A propeptide spanning residues 84-86 is cleaved from the precursor; the sequence is EKS.

The protein belongs to the RGF family. Binds to LRR receptor-like serine/threonine-protein kinases to trigger their dimerization with SERK proteins and subsequent signaling. Expressed in stems, hypocotyls, cotyledons, leaves, flowers, shoot apex, siliques, stamens and petals.

It is found in the endoplasmic reticulum. It localises to the secreted. Signaling peptide (root growth factor) that regulates the pattern of root growth and lateral root development by modulating the length and the number of cortical cells in the root apical meristem (RAM), and the anticlinal asymmetric cell divisions in lateral root initiation cells. Also involved in the regulation of hypocotyl bending and root gravitropism in a PIN2-traffic dependent manner, thus influencing the formation of auxin gradients. Maintains the postembryonic root stem cell niche. The polypeptide is Protein GOLVEN 1 (Arabidopsis thaliana (Mouse-ear cress)).